Reading from the N-terminus, the 483-residue chain is MLLKKRSPTSILGTLALTGIVISYMIGGGIFSLPQNMAASASAGAVMLAWMLSGIGIFFIANTFKTLSIIRPDLKAGIYTYSREGFGPYVGFTIAWGYWLCQIFGNVGYAVITMDALNYFFPPYFAGGNTIPAILLGSLLIWIFNYIVLRGIRQASFVNIIGVVCTLIPLLLFILITARFFKFSIFKTDFWGTAPQHTLGSIGSQLKSTMLVTLWAFIGIEGAVVISGRAANPSSVGKATILGFSGCLLIYVLLSLLPFGSLFQYQLAKIADPSTAGVLNILVGKWGEVLMNTGLLIAVLTSWLSWTILASEIPYAAAKNGTFPECFAIENSKHAPSFSLFMTSGLMQITMLLVYFSSNAWNTMLEITGVMVLPAYLTSSLFLVKFSLSKKYPKQAAIKARIAMITGLLGSLYSLWLIYAGGLQHLFMVAILLALGIPFYVDSGIRHKQEKTFLNRKEILKMTIMALAALLAIFLFSANKIHL.

12 helical membrane-spanning segments follow: residues 11 to 33 (ILGTLALTGIVISYMIGGGIFSL), 48 to 70 (LAWMLSGIGIFFIANTFKTLSII), 90 to 112 (VGFTIAWGYWLCQIFGNVGYAVI), 127 to 149 (GGNTIPAILLGSLLIWIFNYIVL), 156 to 178 (SFVNIIGVVCTLIPLLLFILITA), 209 to 228 (TMLVTLWAFIGIEGAVVISG), 241 to 263 (ILGFSGCLLIYVLLSLLPFGSLF), 293 to 315 (TGLLIAVLTSWLSWTILASEIPY), 335 to 357 (APSFSLFMTSGLMQITMLLVYFS), 367 to 389 (ITGVMVLPAYLTSSLFLVKFSLS), 415 to 435 (LWLIYAGGLQHLFMVAILLAL), and 458 to 477 (EILKMTIMALAALLAIFLFS).

Belongs to the amino acid-polyamine-organocation (APC) superfamily. Basic amino acid/polyamine antiporter (APA) (TC 2.A.3.2) family.

The protein localises to the cell inner membrane. Catalyzes the exchange of L-arginine for agmatine. The arginine uptake by the bacterium in the macrophage may be a virulence factor against the host innate immune response. The sequence is that of Arginine/agmatine antiporter (aaxC) from Chlamydia trachomatis serovar L2 (strain ATCC VR-902B / DSM 19102 / 434/Bu).